The chain runs to 350 residues: Serine/arginine-rich splicing factor RS40 (350 aa).

2 RRM domains span residues 2 to 74 and 97 to 168; these read KPVF…WTKS and KTLF…YAVK. 2 stretches are compositionally biased toward basic and acidic residues: residues 73–82 and 167–187; these read KSERGGDKRS and VKDDDARGNGHSPERRRDRSP. Disordered regions lie at residues 73–94 and 167–350; these read KSERGGDKRSGGGSRRSSSSMR and VKDD…PADE. Residues serine 193, serine 195, and serine 211 each carry the phosphoserine modification. 2 stretches are compositionally biased toward basic and acidic residues: residues 216 to 227 and 240 to 255; these read YRKERTSPDYGR and GSPEYGRDRRGNDSPR. 7 positions are modified to phosphoserine: serine 241, serine 262, serine 278, serine 298, serine 308, serine 335, and serine 340. The segment covering 272-289 has biased composition (basic and acidic residues); the sequence is NKRERMSPNHSPFKKESP. Basic and acidic residues predominate over residues 299–308; the sequence is PIERRERSRS.

It belongs to the splicing factor SR family. RS subfamily. As to quaternary structure, component of the spliceosome. Interacts with SNRNP35. Interacts with CYP59. Interacts with RCF3 and CPL1. Interacts with DRB1/HYL1 and SE. Highly expressed in roots and flowers. A presumably longer alternatively spliced form is found in leaves, stems and flowers.

It is found in the nucleus. Its subcellular location is the nucleus speckle. In terms of biological role, required for constitutive and alternative pre-mRNA splicing. Involved in primary miRNA processing and pri-miRNA biogenesis. Binds both intronless and intron-containing pri-miRNAs. This chain is Serine/arginine-rich splicing factor RS40 (RS40), found in Arabidopsis thaliana (Mouse-ear cress).